The following is a 373-amino-acid chain: MIELITDKPHPMHLVDSLCDPQLFATLAKTSPLIFITNSTLEILVLPPLLETARSLGFSVEILIIPEGEQAKTETTFLYLHKQLATLTIPRQATLIGVGGGVVLDIVGFVASTHCRGMPFIAVPTTLVAMIDASIGGKNGINLDHIKNRIGSFYLPKDVWICPSVLSSLPEQEFYHGIAECIKHAYIADASILPILQNPASLRSTKQLSLLIKRNCLCKASIVGKDIRDHGIRQILNFGHTLGHALEMLFTGKISHGFAISVGMVLETKLSLAMGVARNPNILHFLVQDLLRYQLPTSLKDLYAQAQIPIHSCSQILSALSYDKKKQNASLPPFVMIEEIGLAASCNGSFCQPASNHFLTHILKEDLHAMHDH.

NAD(+) is bound by residues 67-72 (EGEQAK), 101-105 (GVVLD), 125-126 (TT), Lys-138, and Lys-147. 3 residues coordinate Zn(2+): Glu-180, His-240, and His-256.

This sequence belongs to the sugar phosphate cyclases superfamily. Dehydroquinate synthase family. NAD(+) is required as a cofactor. It depends on Co(2+) as a cofactor. The cofactor is Zn(2+).

It is found in the cytoplasm. It carries out the reaction 7-phospho-2-dehydro-3-deoxy-D-arabino-heptonate = 3-dehydroquinate + phosphate. The protein operates within metabolic intermediate biosynthesis; chorismate biosynthesis; chorismate from D-erythrose 4-phosphate and phosphoenolpyruvate: step 2/7. Its function is as follows. Catalyzes the conversion of 3-deoxy-D-arabino-heptulosonate 7-phosphate (DAHP) to dehydroquinate (DHQ). The protein is 3-dehydroquinate synthase (aroB) of Chlamydia muridarum (strain MoPn / Nigg).